The sequence spans 358 residues: Feruloyl CoA ortho-hydroxylase F6H1-2 (358 aa).

Residues 200 to 308 (TKESLLMGSK…RISVPIFVNP (109 aa)) enclose the Fe2OG dioxygenase domain. Position 216 (Y216) interacts with 2-oxoglutarate. Positions 231, 233, and 289 each coordinate Fe cation. R299 and S301 together coordinate 2-oxoglutarate.

It belongs to the iron/ascorbate-dependent oxidoreductase family. Requires L-ascorbate as cofactor. Fe(2+) serves as cofactor. As to expression, expressed at low levels in tubers, underground stems, leaves and petioles.

It carries out the reaction (E)-feruloyl-CoA + 2-oxoglutarate + O2 = (E)-6-hydroxyferuloyl-CoA + succinate + CO2. It functions in the pathway phenylpropanoid metabolism. Functionally, 2-oxoglutarate (OG)- and Fe(II)-dependent dioxygenase (2OGD) involved in scopoletin biosynthesis. Converts feruloyl CoA into 6'-hydroxyferuloyl CoA, and, at low efficiency, caffeoyl-CoA into 6'-hydroxycaffeate, but has no activity with p-coumaroyl-CoA. The protein is Feruloyl CoA ortho-hydroxylase F6H1-2 of Ipomoea batatas (Sweet potato).